Reading from the N-terminus, the 137-residue chain is Proline-rich protein 13 (137 aa).

Disordered regions lie at residues 26–54 (PPPLNPAFPPGPCPPGIPQGNPAFPPCRP) and 94–137 (VGPG…SDSD). Residues 103 to 124 (KTRKKMKKAHKKSHKHHKHGKH) show a composition bias toward basic residues. Residues 125-137 (SSSSSSSSSSDSD) are compositionally biased toward low complexity.

It localises to the nucleus. Negatively regulates TSP1 expression at the level of transcription. This down-regulation was shown to reduce taxane-induced apoptosis. The chain is Proline-rich protein 13 (Prr13) from Mus musculus (Mouse).